A 268-amino-acid chain; its full sequence is Tryptophan synthase alpha chain (268 aa).

Residues glutamate 49 and aspartate 60 each act as proton acceptor in the active site.

This sequence belongs to the TrpA family. Tetramer of two alpha and two beta chains.

The catalysed reaction is (1S,2R)-1-C-(indol-3-yl)glycerol 3-phosphate + L-serine = D-glyceraldehyde 3-phosphate + L-tryptophan + H2O. The protein operates within amino-acid biosynthesis; L-tryptophan biosynthesis; L-tryptophan from chorismate: step 5/5. Its function is as follows. The alpha subunit is responsible for the aldol cleavage of indoleglycerol phosphate to indole and glyceraldehyde 3-phosphate. This chain is Tryptophan synthase alpha chain, found in Vibrio parahaemolyticus serotype O3:K6 (strain RIMD 2210633).